Reading from the N-terminus, the 356-residue chain is DNA polymerase IV (356 aa).

In terms of domain architecture, UmuC spans methionine 1 to glycine 188. Residues aspartate 11 and aspartate 106 each coordinate Mg(2+). Glutamate 107 is a catalytic residue.

This sequence belongs to the DNA polymerase type-Y family. As to quaternary structure, monomer. The cofactor is Mg(2+).

The protein resides in the cytoplasm. The enzyme catalyses DNA(n) + a 2'-deoxyribonucleoside 5'-triphosphate = DNA(n+1) + diphosphate. Functionally, poorly processive, error-prone DNA polymerase involved in untargeted mutagenesis. Copies undamaged DNA at stalled replication forks, which arise in vivo from mismatched or misaligned primer ends. These misaligned primers can be extended by PolIV. Exhibits no 3'-5' exonuclease (proofreading) activity. May be involved in translesional synthesis, in conjunction with the beta clamp from PolIII. In Listeria innocua serovar 6a (strain ATCC BAA-680 / CLIP 11262), this protein is DNA polymerase IV.